Consider the following 188-residue polypeptide: Adenine phosphoribosyltransferase (188 aa).

The protein belongs to the purine/pyrimidine phosphoribosyltransferase family. Homodimer.

The protein resides in the cytoplasm. It catalyses the reaction AMP + diphosphate = 5-phospho-alpha-D-ribose 1-diphosphate + adenine. It participates in purine metabolism; AMP biosynthesis via salvage pathway; AMP from adenine: step 1/1. In terms of biological role, catalyzes a salvage reaction resulting in the formation of AMP, that is energically less costly than de novo synthesis. In Paraburkholderia phytofirmans (strain DSM 17436 / LMG 22146 / PsJN) (Burkholderia phytofirmans), this protein is Adenine phosphoribosyltransferase.